The sequence spans 318 residues: Phosphatidylglycerol--prolipoprotein diacylglyceryl transferase (318 aa).

Helical transmembrane passes span 23–43 (PLTIRFYALCILAGIVIGAWL), 59–79 (MDIIMWAVPFGIVGGRLYHVI), 98–118 (IWEGGLGIWGAVAVGLAGAAI), 124–146 (GVRLATFADAAAPGLLLAQAMGR), 192–212 (FQPTFLYESLWCLAAAALLVF), 219–239 (LGAGSVFALYVVLYTAGRFIF), and 253–273 (LRVNTWVSALLFLAALAVFLI). Arg146 contacts a 1,2-diacyl-sn-glycero-3-phospho-(1'-sn-glycerol). Over residues 293-312 (FDTRANGHDPEKHDETDGKG) the composition is skewed to basic and acidic residues. Positions 293–318 (FDTRANGHDPEKHDETDGKGNRHHVP) are disordered.

The protein belongs to the Lgt family.

The protein resides in the cell membrane. The catalysed reaction is L-cysteinyl-[prolipoprotein] + a 1,2-diacyl-sn-glycero-3-phospho-(1'-sn-glycerol) = an S-1,2-diacyl-sn-glyceryl-L-cysteinyl-[prolipoprotein] + sn-glycerol 1-phosphate + H(+). The protein operates within protein modification; lipoprotein biosynthesis (diacylglyceryl transfer). In terms of biological role, catalyzes the transfer of the diacylglyceryl group from phosphatidylglycerol to the sulfhydryl group of the N-terminal cysteine of a prolipoprotein, the first step in the formation of mature lipoproteins. The chain is Phosphatidylglycerol--prolipoprotein diacylglyceryl transferase from Paenarthrobacter aurescens (strain TC1).